A 287-amino-acid polypeptide reads, in one-letter code: Ribosomal RNA small subunit methyltransferase I (287 aa).

The protein belongs to the methyltransferase superfamily. RsmI family.

The protein resides in the cytoplasm. The catalysed reaction is cytidine(1402) in 16S rRNA + S-adenosyl-L-methionine = 2'-O-methylcytidine(1402) in 16S rRNA + S-adenosyl-L-homocysteine + H(+). Catalyzes the 2'-O-methylation of the ribose of cytidine 1402 (C1402) in 16S rRNA. This chain is Ribosomal RNA small subunit methyltransferase I, found in Helicobacter pylori (strain ATCC 700392 / 26695) (Campylobacter pylori).